We begin with the raw amino-acid sequence, 347 residues long: Heat-inducible transcription repressor HrcA (347 aa).

The protein belongs to the HrcA family.

Negative regulator of class I heat shock genes (grpE-dnaK-dnaJ and groELS operons). Prevents heat-shock induction of these operons. This is Heat-inducible transcription repressor HrcA from Lactococcus lactis subsp. cremoris (strain SK11).